Reading from the N-terminus, the 146-residue chain is Decoration protein (146 aa).

As to quaternary structure, homotrimer. Interacts with the major capsid protein.

Its subcellular location is the virion. In terms of biological role, cooperatively binds the expanded capsid, thereby stabilizing the mature capsid shell and allowing the large viral DNA to be packaged. Trimers of capsid decoration proteins molecules are located at local and icosahedral threefold axes and stabilize the expanded capsid, which shows increased spacing between capsomers. This Thermus thermophilus (Thermus thermophilus phage P23-45) protein is Decoration protein.